Here is a 203-residue protein sequence, read N- to C-terminus: Small ribosomal subunit protein uS4 (203 aa).

The S4 RNA-binding domain occupies Q93–V156.

It belongs to the universal ribosomal protein uS4 family. Part of the 30S ribosomal subunit. Contacts protein S5. The interaction surface between S4 and S5 is involved in control of translational fidelity.

In terms of biological role, one of the primary rRNA binding proteins, it binds directly to 16S rRNA where it nucleates assembly of the body of the 30S subunit. Its function is as follows. With S5 and S12 plays an important role in translational accuracy. This Lactococcus lactis subsp. cremoris (strain MG1363) protein is Small ribosomal subunit protein uS4.